A 252-amino-acid chain; its full sequence is Streptothricin hydrolase (252 aa).

The active-site Nucleophile is C158. Positions 230-242 (AVGPAAAPGLPVS) are enriched in low complexity. Residues 230–252 (AVGPAAAPGLPVSPAAPPPSPVR) form a disordered region. Residues 243–252 (PAAPPPSPVR) are compositionally biased toward pro residues.

This sequence belongs to the isochorismatase family.

The catalysed reaction is streptothricin F + H2O = streptothricin F acid. In terms of biological role, catalyzes the hydrolysis of the amide bond of streptolidine lactam, thereby conferring streptothricin (ST) resistance. Can hydrolyze streptothricin-F and streptothricin-D. However, this strain is believed to be a ST nonproducer, which raises the possibility that its true role may not be its involvement in self-resistance to STs. May catalyze the hydrolysis of naturally occurring cyclic amide compounds that are structurally related to STs. This chain is Streptothricin hydrolase (sttH), found in Streptomyces noursei (Streptomyces albulus).